The sequence spans 152 residues: Lipoprotein signal peptidase (152 aa).

2 helical membrane-spanning segments follow: residues 55–75 (NKMW…VFYM) and 85–105 (LGIS…DRVF). Active-site residues include D111 and D129. Residues 124 to 144 (VFNIADSALCIGVVLIIIQTL) form a helical membrane-spanning segment.

The protein belongs to the peptidase A8 family.

It is found in the cell membrane. The enzyme catalyses Release of signal peptides from bacterial membrane prolipoproteins. Hydrolyzes -Xaa-Yaa-Zaa-|-(S,diacylglyceryl)Cys-, in which Xaa is hydrophobic (preferably Leu), and Yaa (Ala or Ser) and Zaa (Gly or Ala) have small, neutral side chains.. The protein operates within protein modification; lipoprotein biosynthesis (signal peptide cleavage). Functionally, this protein specifically catalyzes the removal of signal peptides from prolipoproteins. The sequence is that of Lipoprotein signal peptidase from Bacillus cereus (strain AH187).